The chain runs to 614 residues: Asparagine synthetase [glutamine-hydrolyzing] 3 (614 aa).

The active-site For GATase activity is Cys-2. One can recognise a Glutamine amidotransferase type-2 domain in the interval 2 to 216 (CGITGWVDFK…PAHALTFSKD (215 aa)). L-glutamine is bound by residues 50–54 (RLAVV), 77–79 (NGE), and Asp-102. 377-378 (SG) is an ATP binding site.

Belongs to the asparagine synthetase family.

It catalyses the reaction L-aspartate + L-glutamine + ATP + H2O = L-asparagine + L-glutamate + AMP + diphosphate + H(+). Its pathway is amino-acid biosynthesis; L-asparagine biosynthesis; L-asparagine from L-aspartate (L-Gln route): step 1/1. Asparagine synthetase involved in sporulation. The chain is Asparagine synthetase [glutamine-hydrolyzing] 3 (asnO) from Bacillus subtilis (strain 168).